The following is a 275-amino-acid chain: MATYLIGDLHGCYDEFQMLLERVRFDPAQDTLYLTGDLLARGDNSLACLRLVKSLGNAARTVLANHDLHFISTALGVKKIKPRDRVDAIFAAEDFFELVNWLRCQPLLIHNPAQNFVLVHAGISPDWDLTAAKVCANEVENVLRHGNYRYLVENMYAEQPDRWSPHLQGLDRLRYSINVLTRMRFCYLDHRLDFACKLSIKDAPKALAPWFALDNPLYQTGNIVFGHWASLVDETTPPNIYGLDTGCVWGNRLTMLRWEDKQYFTQSAVKKSNAF.

This sequence belongs to the Ap4A hydrolase family.

The catalysed reaction is P(1),P(4)-bis(5'-adenosyl) tetraphosphate + H2O = 2 ADP + 2 H(+). Its function is as follows. Hydrolyzes diadenosine 5',5'''-P1,P4-tetraphosphate to yield ADP. The sequence is that of Bis(5'-nucleosyl)-tetraphosphatase, symmetrical (apaH) from Aggregatibacter actinomycetemcomitans (Actinobacillus actinomycetemcomitans).